Consider the following 171-residue polypeptide: uncharacterized protein (171 aa).

The disordered stretch occupies residues 139 to 171 (ARKPTKSDDEEEEVGKMGGISSSINSWVQRQKL). Polar residues predominate over residues 158–171 (ISSSINSWVQRQKL).

This is an uncharacterized protein from Caenorhabditis elegans.